A 307-amino-acid chain; its full sequence is Heparan sulfate glucosamine 3-O-sulfotransferase 1 (307 aa).

The signal sequence occupies residues 1–20; the sequence is MAALLLGAVLLVAQPQLVPS. The N-linked (GlcNAc...) asparagine glycan is linked to Asn48. Residues 64-68, Arg147, and Ser155 each bind 3'-phosphoadenylyl sulfate; that span reads KGGTR. 3 N-linked (GlcNAc...) asparagine glycosylation sites follow: Asn192, Asn242, and Asn249. 3'-phosphoadenylyl sulfate is bound at residue Tyr255. An intrachain disulfide couples Cys256 to Cys265. 270–274 contributes to the 3'-phosphoadenylyl sulfate binding site; the sequence is KGRAH.

It belongs to the sulfotransferase 1 family. In terms of tissue distribution, highly expressed in the brain and kidney and weakly expressed in the heart, lung and placenta.

The protein localises to the golgi apparatus lumen. It catalyses the reaction alpha-D-glucosaminyl-[heparan sulfate](n) + 3'-phosphoadenylyl sulfate = 3-sulfo-alpha-D-glucosaminyl-[heparan sulfate](n) + adenosine 3',5'-bisphosphate + H(+). In terms of biological role, sulfotransferase that utilizes 3'-phospho-5'-adenylyl sulfate (PAPS) to catalyze the transfer of a sulfo group to position 3 of glucosamine residues in heparan. Catalyzes the rate limiting step in the biosynthesis of heparan sulfate (HSact). This modification is a crucial step in the biosynthesis of anticoagulant heparan sulfate as it completes the structure of the antithrombin pentasaccharide binding site. The polypeptide is Heparan sulfate glucosamine 3-O-sulfotransferase 1 (HS3ST1) (Homo sapiens (Human)).